A 437-amino-acid polypeptide reads, in one-letter code: Protein farnesyltransferase subunit beta (437 aa).

PFTB repeat units follow at residues 123–164, 174–215, 222–263, 270–312, and 332–374; these read ATDV…CIIG, REKL…SLTN, FEGT…VILK, LKSL…PLLH, and QQAL…SIAQ. Residues 248–251 and 291–294 contribute to the (2E,6E)-farnesyl diphosphate site; these read HGGY and RCNK. Zn(2+)-binding residues include Asp-297 and Cys-299. 300 to 303 contributes to the (2E,6E)-farnesyl diphosphate binding site; it reads YSFW. His-362 contacts Zn(2+). Thr-436 carries the post-translational modification Phosphothreonine.

This sequence belongs to the protein prenyltransferase subunit beta family. In terms of assembly, heterodimer of FNTA and FNTB. The cofactor is Zn(2+).

The enzyme catalyses L-cysteinyl-[protein] + (2E,6E)-farnesyl diphosphate = S-(2E,6E)-farnesyl-L-cysteinyl-[protein] + diphosphate. Its function is as follows. Essential subunit of the farnesyltransferase complex. Catalyzes the transfer of a farnesyl moiety from farnesyl diphosphate to a cysteine at the fourth position from the C-terminus of several proteins having the C-terminal sequence Cys-aliphatic-aliphatic-X. The sequence is that of Protein farnesyltransferase subunit beta (FNTB) from Homo sapiens (Human).